The following is a 259-amino-acid chain: Global transcriptional regulator CodY (259 aa).

The interval 1–155 (MELLAKTRKL…SSTVVGMEIL (155 aa)) is GAF domain. Positions 203 to 222 (ASKIADRVGITRSVIVNALR) form a DNA-binding region, H-T-H motif. Position 215 is a phosphoserine (S215).

Belongs to the CodY family.

It localises to the cytoplasm. Functionally, DNA-binding global transcriptional regulator which is involved in the adaptive response to starvation and acts by directly or indirectly controlling the expression of numerous genes in response to nutrient availability. During rapid exponential growth, CodY is highly active and represses genes whose products allow adaptation to nutrient depletion. The protein is Global transcriptional regulator CodY of Bacillus mycoides (strain KBAB4) (Bacillus weihenstephanensis).